The following is a 464-amino-acid chain: Probable 1,4-beta-D-glucan cellobiohydrolase C (464 aa).

The first 19 residues, 1-19 (MKNFAPSLALSLLLPTVQA), serve as a signal peptide directing secretion. The region spanning 20-55 (QQTMWGQCGGAGWSGATDCVAGGVCSTQNAYYAQCL) is the CBM1 domain. 2 disulfide bridges follow: Cys-27–Cys-44 and Cys-38–Cys-54. Positions 59-102 (TTATTLSTTSKGTTTTTTSSTTSTGGGSSSTTTKTSTSAGPTVT) are thr-rich linker. Over residues 65–100 (STTSKGTTTTTTSSTTSTGGGSSSTTTKTSTSAGPT) the composition is skewed to low complexity. Residues 65-108 (STTSKGTTTTTTSSTTSTGGGSSSTTTKTSTSAGPTVTGSPSGN) form a disordered region. The interval 103 to 464 (GSPSGNPFSG…QLLTNANPAF (362 aa)) is catalytic. Asp-194 is a catalytic residue. Intrachain disulfides connect Cys-195/Cys-254 and Cys-386/Cys-433. The Proton donor role is filled by Asp-240. The Nucleophile role is filled by Asp-419.

This sequence belongs to the glycosyl hydrolase 6 (cellulase B) family.

It localises to the secreted. The enzyme catalyses Hydrolysis of (1-&gt;4)-beta-D-glucosidic linkages in cellulose and cellotetraose, releasing cellobiose from the non-reducing ends of the chains.. In terms of biological role, the biological conversion of cellulose to glucose generally requires three types of hydrolytic enzymes: (1) Endoglucanases which cut internal beta-1,4-glucosidic bonds; (2) Exocellobiohydrolases that cut the disaccharide cellobiose from the non-reducing end of the cellulose polymer chain; (3) Beta-1,4-glucosidases which hydrolyze the cellobiose and other short cello-oligosaccharides to glucose. The protein is Probable 1,4-beta-D-glucan cellobiohydrolase C (cbhC) of Aspergillus clavatus (strain ATCC 1007 / CBS 513.65 / DSM 816 / NCTC 3887 / NRRL 1 / QM 1276 / 107).